A 561-amino-acid polypeptide reads, in one-letter code: Cloacin (561 aa).

Composition is skewed to gly residues over residues 1–21, 29–40, and 66–91; these read MSGGDGRGPGNSGLGHNGGQA, SGKGGPSSGGGT, and FGNGGSKPGGNGGNSGNHSGSSGGGQ. Disordered regions lie at residues 1–93, 254–273, 304–326, 432–507, and 530–561; these read MSGG…GQSS, PKGIVAEKGDSRPAGFTAGG, VKQRQEEEKRRQQAWDAAHPEEG, KAAL…KRAR, and RASDGEHLGAFDPKTGKQVKGPDPKRNIKKYL. The tract at residues 1-180 is involved in the translocation of the protein across the cell membrane; it reads MSGGDGRGPG…DTVTETPAST (180 aa). A responsible for the receptor binding activity region spans residues 200-420; the sequence is DERQHIAVVA…NAKLKAAQAS (221 aa). 2 stretches are compositionally biased toward basic and acidic residues: residues 306-326 and 440-494; these read QRQEEEKRRQQAWDAAHPEEG and ESRK…EGKP. Residues 421–561 form a ribonuclease activity region; that stretch reads LNAMNDALSR…DPKRNIKKYL (141 aa). The tract at residues 540-561 is binding of immunity protein; that stretch reads FDPKTGKQVKGPDPKRNIKKYL.

It belongs to the cloacin colicin family.

In terms of biological role, inactivates ribosomes by hydrolyzing 16S RNA in 30S ribosomes at a specific site. Its function is as follows. Colicins are polypeptide toxins produced by and active against E.coli and closely related bacteria. The polypeptide is Cloacin (ccl) (Escherichia coli).